Reading from the N-terminus, the 266-residue chain is MMKTLSSGNCTLSVPAKNSYRMVVLGASRVGKSSIVSRFLNGRFEDQYTPTIEDFHRKVYNIRGDMYQLDILDTSGNHPFPAMRRLSILTGDVFILVFSLDNRESFDEVKRLQKQILEVKSCLKNKTKEAAELPMVICGNKNDHGELCRQVPTTEAELLVSGDENCAYFEVSAKKNTNVDEMFYVLFSMAKLPHEMSPALHRKISVQYGDAFHPRPFCMRRVKEMDAYGMVSPFARRPSVNSDLKYIKAKVLREGQARERDKCTIQ.

26-33 (GASRVGKS) serves as a coordination point for GTP. The Effector region motif lies at 48–56 (YTPTIEDFH). GTP-binding positions include 73–77 (DTSGN) and 140–143 (NKND). An interaction with GNB1, GNB2 and GNB3 region spans residues 189–235 (MAKLPHEMSPALHRKISVQYGDAFHPRPFCMRRVKEMDAYGMVSPFA). Cysteine 263 is modified (cysteine methyl ester). A lipid anchor (S-farnesyl cysteine) is attached at cysteine 263. Residues 264-266 (TIQ) constitute a propeptide, removed in mature form.

The protein belongs to the small GTPase superfamily. RasD family. As to quaternary structure, monomer (Potential). Interacts with PIK3CA and UBE2I. Interacts with GNB1, GNB2 and GNB3. Interacts with HTT; interacts with mutant HTT (mHTT) with a much higher affinity than wild type HTT. Post-translationally, farnesylated. Farnesylation is required for membrane targeting. As to expression, pancreatic endocrine cells (islets of Langerhans).

It localises to the cell membrane. Functionally, GTPase signaling protein that binds to and hydrolyzes GTP. Regulates signaling pathways involving G-proteins-coupled receptor and heterotrimeric proteins such as GNB1, GNB2 and GNB3. May be involved in selected striatal competencies, mainly locomotor activity and motor coordination. This is GTP-binding protein Rhes (RASD2) from Homo sapiens (Human).